Consider the following 495-residue polypeptide: Glycerol kinase (495 aa).

Thr11 lines the ADP pocket. Thr11, Thr12, and Ser13 together coordinate ATP. Thr11 contributes to the sn-glycerol 3-phosphate binding site. Arg15 is an ADP binding site. Sn-glycerol 3-phosphate-binding residues include Arg81, Glu82, Tyr133, and Asp242. Glycerol contacts are provided by Arg81, Glu82, Tyr133, Asp242, and Gln243. The ADP site is built by Thr264 and Gly307. Thr264, Gly307, Gln311, and Gly408 together coordinate ATP. Positions 408 and 412 each coordinate ADP.

It belongs to the FGGY kinase family.

The catalysed reaction is glycerol + ATP = sn-glycerol 3-phosphate + ADP + H(+). It functions in the pathway polyol metabolism; glycerol degradation via glycerol kinase pathway; sn-glycerol 3-phosphate from glycerol: step 1/1. Inhibited by fructose 1,6-bisphosphate (FBP). Functionally, key enzyme in the regulation of glycerol uptake and metabolism. Catalyzes the phosphorylation of glycerol to yield sn-glycerol 3-phosphate. The polypeptide is Glycerol kinase (Acinetobacter baylyi (strain ATCC 33305 / BD413 / ADP1)).